Reading from the N-terminus, the 103-residue chain is Large ribosomal subunit protein bL21 (103 aa).

Belongs to the bacterial ribosomal protein bL21 family. Part of the 50S ribosomal subunit. Contacts protein L20.

Its function is as follows. This protein binds to 23S rRNA in the presence of protein L20. The sequence is that of Large ribosomal subunit protein bL21 from Glaesserella parasuis serovar 5 (strain SH0165) (Haemophilus parasuis).